Consider the following 362-residue polypeptide: MARLRDCLPRLMLTLRSLLFWSLVYCYCGLCASIHLLKLLWSLGKGPAQTFRRPAREHPPACLSDPSLGTHCYVRIKDSGLRFHYVAAGERGKPLMLLLHGFPEFWYSWRYQLREFKSEYRVVALDLRGYGETDAPIHRQNYKLDCLITDIKDILDSLGYSKCVLIGHDWGGMIAWLIAICYPEMVMKLIVINFPHPNVFTEYILRHPAQLLKSSYYYFFQIPWFPEFMFSINDFKVLKHLFTSHSTGIGRKGCQLTTEDLEAYIYVFSQPGALSGPINHYRNIFSCLPLKHHMVTTPTLLLWGENDAFMEVEMAEVTKIYVKNYFRLTILSEASHWLQQDQPDIVNKLIWTFLKEETRKKD.

The helical; Signal-anchor for type II membrane protein transmembrane segment at 17–37 threads the bilayer; it reads SLLFWSLVYCYCGLCASIHLL. Residues 94–211 enclose the AB hydrolase-1 domain; it reads PLMLLLHGFP…EYILRHPAQL (118 aa). Aspartate 169 (nucleophile) is an active-site residue. Tyrosine 281 functions as the Proton donor in the catalytic mechanism. Histidine 336 acts as the Proton acceptor in catalysis.

This sequence belongs to the AB hydrolase superfamily. Epoxide hydrolase family.

The protein localises to the membrane. The chain is Epoxide hydrolase 4 (EPHX4) from Homo sapiens (Human).